The chain runs to 96 residues: Small ribosomal subunit protein bS18 (96 aa).

This sequence belongs to the bacterial ribosomal protein bS18 family. Part of the 30S ribosomal subunit. Forms a tight heterodimer with protein bS6.

Its function is as follows. Binds as a heterodimer with protein bS6 to the central domain of the 16S rRNA, where it helps stabilize the platform of the 30S subunit. In Gluconobacter oxydans (strain 621H) (Gluconobacter suboxydans), this protein is Small ribosomal subunit protein bS18.